The sequence spans 191 residues: Orotate phosphoribosyltransferase (191 aa).

114–122 (EDVITTGGS) is a binding site for 5-phospho-alpha-D-ribose 1-diphosphate. Positions 118 and 146 each coordinate orotate.

The protein belongs to the purine/pyrimidine phosphoribosyltransferase family. PyrE subfamily. In terms of assembly, homodimer. It depends on Mg(2+) as a cofactor.

It catalyses the reaction orotidine 5'-phosphate + diphosphate = orotate + 5-phospho-alpha-D-ribose 1-diphosphate. Its pathway is pyrimidine metabolism; UMP biosynthesis via de novo pathway; UMP from orotate: step 1/2. Catalyzes the transfer of a ribosyl phosphate group from 5-phosphoribose 1-diphosphate to orotate, leading to the formation of orotidine monophosphate (OMP). The sequence is that of Orotate phosphoribosyltransferase from Desulforamulus reducens (strain ATCC BAA-1160 / DSM 100696 / MI-1) (Desulfotomaculum reducens).